The chain runs to 740 residues: 1,4-alpha-glucan branching enzyme GlgB (740 aa).

Residue D414 is the Nucleophile of the active site. E467 functions as the Proton donor in the catalytic mechanism.

Belongs to the glycosyl hydrolase 13 family. GlgB subfamily. In terms of assembly, monomer.

The catalysed reaction is Transfers a segment of a (1-&gt;4)-alpha-D-glucan chain to a primary hydroxy group in a similar glucan chain.. It participates in glycan biosynthesis; glycogen biosynthesis. In terms of biological role, catalyzes the formation of the alpha-1,6-glucosidic linkages in glycogen by scission of a 1,4-alpha-linked oligosaccharide from growing alpha-1,4-glucan chains and the subsequent attachment of the oligosaccharide to the alpha-1,6 position. This is 1,4-alpha-glucan branching enzyme GlgB from Rhodospirillum rubrum (strain ATCC 11170 / ATH 1.1.1 / DSM 467 / LMG 4362 / NCIMB 8255 / S1).